The primary structure comprises 1460 residues: Nucleoporin NUP159 (1460 aa).

Residues 1 to 500 are interaction with DBP5; that stretch reads MSSLKDEVPT…SEQDATDPAS (500 aa). An FG 1 repeat occupies 228–231; sequence AVFG. The PXFG 1 repeat unit spans residues 267-270; that stretch reads PPFG. Residues 401-435 are disordered; sequence KSLSPTSEKIPIAGQEQEEKKKNNESSKALSENPF. A Phosphoserine modification is found at Ser-404. The stretch at 462-470 is one SXFGXPXFG 1 repeat; that stretch reads STFGAPSFG. The interval 483–504 is disordered; sequence STSTGVASSEQDATDPASAKPV. Residues 497–701 are interactions with CRM1 and GLE1; the sequence is DPASAKPVFG…KPNTSTKPKT (205 aa). Residues 503–511 form an SXFGXPXFG 2; approximate repeat; sequence PVFGKPAFG. An SXFGXPXFG 3; approximate repeat occupies 522 to 530; the sequence is YAFGKPSFG. The stretch at 532–535 is one PXFG 2 repeat; that stretch reads PSFG. The interval 533-619 is disordered; it reads SFGSGKSSVE…SAFGTASSNE (87 aa). Composition is skewed to polar residues over residues 536-546, 556-567, 582-593, and 607-619; these read SGKSSVESPAS, GTPSFGSGNSSV, GTPSFGSGNSSA, and FGTS…SSNE. The SXFGXPXFG 4 repeat unit spans residues 548–556; the sequence is SAFGKPSFG. The PXFG 3 repeat unit spans residues 558-561; sequence PSFG. The SXFGXPXFG 5 repeat unit spans residues 574–582; that stretch reads SAFGKPSFG. A PXFG 4 repeat occupies 584 to 587; the sequence is PSFG. The stretch at 600 to 608 is one SXFGXPXFG 6 repeat; that stretch reads SAFGKPSFG. Residues 610-613 form an SXFG 1 repeat; that stretch reads SAFG. One copy of the SXFGXPXFG 7; approximate repeat lies at 624 to 632; the sequence is SIFGKAAFG. Residues 642–645 form an FG 2 repeat; that stretch reads ELFG. The disordered stretch occupies residues 647 to 704; the sequence is NFTISKPTVDSPKEVDSTSPFPSSGDQSEDESKSDVDSSSTPFGTKPNTSTKPKTNAF. Ser-657 carries the post-translational modification Phosphoserine. The span at 683–704 shows a compositional bias: low complexity; that stretch reads DSSSTPFGTKPNTSTKPKTNAF. One copy of the FG 3 repeat lies at 687 to 690; that stretch reads TPFG. The stretch at 704–707 is one FXFG 1 repeat; sequence FDFG. Residues 709–712 form an SXFG 2 repeat; sequence SSFG. Ser-724 is subject to Phosphoserine. Polar residues-rich tracts occupy residues 727–750, 757–767, and 778–800; these read TFKF…FSSF, NGSLSKGSTSE, and NGPN…STRL. Residues 727–824 are disordered; sequence TFKFGTQASP…EAQKSPIGKL (98 aa). The FXFG 2 repeat unit spans residues 728–731; it reads FKFG. 2 positions are modified to phosphoserine: Ser-735 and Ser-745. The residue at position 803 (Thr-803) is a Phosphothreonine. A compositionally biased stretch (acidic residues) spans 804 to 814; it reads PSDEDGEVVEE. Ser-805 and Ser-819 each carry phosphoserine. The stretch at 842-845 is one PXFG 5 repeat; it reads PVFG. Residues 861–889 are compositionally biased toward polar residues; that stretch reads TNITKPSSTTPAFSFGNSTMNKSNTSTVS. Residues 861 to 1092 form a disordered region; the sequence is TNITKPSSTT…DINTDELPHG (232 aa). The stretch at 873–876 is one FXFG 3 repeat; that stretch reads FSFG. Ser-889 carries the phosphoserine modification. A compositionally biased stretch (basic and acidic residues) spans 917 to 936; it reads AKEERTGESSKKDHNDDPKD. Phosphoserine is present on Ser-940. The segment covering 942–958 has biased composition (polar residues); the sequence is SEISVRTSESAFDTTAN. Basic and acidic residues-rich tracts occupy residues 960 to 1002, 1017 to 1027, 1035 to 1061, and 1068 to 1092; these read EIPK…KNNE, ALKKDNEKENF, QFED…KESD, and SDRD…LPHG. The interaction with DYN2 stretch occupies residues 1086–1175; it reads TDELPHGGEA…TCNFSVQTFE (90 aa). An interaction with NUP82 region spans residues 1223–1460; sequence AEFTVLMENI…DFFKNLNMAK (238 aa). Coiled-coil stretches lie at residues 1279-1320 and 1383-1418; these read EQMQ…YLFL and AKLA…GKKA.

As to quaternary structure, component of the nuclear pore complex (NPC). NPC constitutes the exclusive means of nucleocytoplasmic transport. NPCs allow the passive diffusion of ions and small molecules and the active, nuclear transport receptor-mediated bidirectional transport of macromolecules such as proteins, RNAs, ribonucleoparticles (RNPs), and ribosomal subunits across the nuclear envelope. Due to its 8-fold rotational symmetry, all subunits are present with 8 copies or multiples thereof. Part of the NUP82 subcomplex, interacts with NUP82 through its C-terminal coiled coil. This subcomplex is the base for interactions with NUP116 and GLE2, with NUP42 and GLE1 and with DYN2. Interacts directly with DYN2. Interacts through its FG repeats with karyopherins, such as heterodimeric mRNA transport factor MEX67/MTR2, CRM1 (XPO1), and PSE1 (GSP1-GDP dependent). Interaction with CRM1 (XPO1) is GSP1-GTP dependent and stimulated by RNA1. NUP159 also interacts with GLE1 and the ATP-dependent RNA helicase DBP5.

The protein localises to the nucleus. It is found in the nuclear pore complex. Its subcellular location is the nucleus membrane. In terms of biological role, functions as a component of the nuclear pore complex (NPC). NPC components, collectively referred to as nucleoporins (NUPs), can play the role of both NPC structural components and of docking or interaction partners for transiently associated nuclear transport factors. Active directional transport is assured by both, a Phe-Gly (FG) repeat affinity gradient for these transport factors across the NPC and a transport cofactor concentration gradient across the nuclear envelope (GSP1 and GSP2 GTPases associated predominantly with GTP in the nucleus, with GDP in the cytoplasm). NUP159 plays an important role in several nuclear export pathways including poly(A)+ RNA, pre-ribosome, and protein export. This Saccharomyces cerevisiae (strain ATCC 204508 / S288c) (Baker's yeast) protein is Nucleoporin NUP159 (NUP159).